Consider the following 111-residue polypeptide: Ribonuclease P protein component 1 (111 aa).

Belongs to the eukaryotic/archaeal RNase P protein component 1 family. In terms of assembly, consists of a catalytic RNA component and at least 4-5 protein subunits.

It localises to the cytoplasm. It catalyses the reaction Endonucleolytic cleavage of RNA, removing 5'-extranucleotides from tRNA precursor.. Part of ribonuclease P, a protein complex that generates mature tRNA molecules by cleaving their 5'-ends. The sequence is that of Ribonuclease P protein component 1 from Hyperthermus butylicus (strain DSM 5456 / JCM 9403 / PLM1-5).